A 744-amino-acid polypeptide reads, in one-letter code: Merozoite surface protein 9 (744 aa).

The N-terminal stretch at M1 to C23 is a signal peptide. Residues K77–E235 form an interaction with MSP1 and host SLC4A1/Band 3 region. 4 disordered regions span residues K202–Y282, D459–D487, N512–D540, and V666–K744. Residues S211–Q224 are compositionally biased toward polar residues. Repeat copies occupy residues V226–D231, V232–D237, T238–D243, T244–D249, T250–D255, T256–D261, T262–D267, and T268–D273. Residues V226–D273 are 8 X 6 AA tandem repeats of [VT]-N-D-[ED]-[ED]-D. Residues V226–H274 show a composition bias toward acidic residues. Residues L364 to K528 are interaction with MSP1 and host SLC4A1/Band 3. Over residues D459–V473 the composition is skewed to basic and acidic residues. Residues N512 to T521 are compositionally biased toward low complexity. Residues N644–V734 adopt a coiled-coil conformation. Composition is skewed to basic and acidic residues over residues K672–E698 and E706–K719. The segment covering E720–V734 has biased composition (acidic residues).

It belongs to the plasmodium ABRA family. In terms of assembly, forms a complex composed of MSP1, MSP6, MSP7, MSP9 and MSP3; within the complex, MSP6 and MSP9 mediate the binding to the host erythrocyte. Interacts with MSP1 subunits p19 and p42; the interaction is direct. Interacts with host SLC4A1/Band 3 protein (via the 5ABC region). MSP1 subunits p19 or p42, and MSP9 form a co-ligand complex that interacts with host SLC4A1/Band 3 protein. Post-translationally, not glycosylated.

It localises to the cell membrane. It is found in the parasitophorous vacuole lumen. The protein localises to the secreted. During the asexual blood stage, involved in the sialic acid-independent (SAID) merozoite invasion of host erythrocytes by binding to host SLC4A1/Band 3 protein on the surface of the host erythrocyte. The protein is Merozoite surface protein 9 of Plasmodium falciparum (isolate 7G8).